We begin with the raw amino-acid sequence, 153 residues long: Arginine repressor (153 aa).

Belongs to the ArgR family.

The protein resides in the cytoplasm. It participates in amino-acid biosynthesis; L-arginine biosynthesis [regulation]. Regulates arginine biosynthesis genes. This Haemophilus ducreyi (strain 35000HP / ATCC 700724) protein is Arginine repressor.